The primary structure comprises 63 residues: Probable rubredoxin (63 aa).

In terms of domain architecture, Rubredoxin-like spans 11 to 62 (MKRYKCRVCGYIYDPEKGEPRTDTPPGTPFEDLPETWRCPSCGAKKKMFKPL). Residues cysteine 16, cysteine 19, cysteine 49, and cysteine 52 each contribute to the Fe cation site.

This sequence belongs to the rubredoxin family. Requires Fe(3+) as cofactor.

Functionally, rubredoxin is a small nonheme, iron protein lacking acid-labile sulfide. Its single Fe, chelated to 4 Cys, functions as an electron acceptor and may also stabilize the conformation of the molecule. In Methanothermobacter thermautotrophicus (strain ATCC 29096 / DSM 1053 / JCM 10044 / NBRC 100330 / Delta H) (Methanobacterium thermoautotrophicum), this protein is Probable rubredoxin.